A 227-amino-acid polypeptide reads, in one-letter code: Small ribosomal subunit protein uS3 (227 aa).

The 71-residue stretch at 24 to 94 (LDEYLEEELG…RVSIEVKELP (71 aa)) folds into the KH type-2 domain. Residues 207 to 227 (EEVEDELKELIGKSEDEAEGA) form a disordered region.

This sequence belongs to the universal ribosomal protein uS3 family. As to quaternary structure, part of the 30S ribosomal subunit.

In terms of biological role, binds the lower part of the 30S subunit head. The chain is Small ribosomal subunit protein uS3 from Methanopyrus kandleri (strain AV19 / DSM 6324 / JCM 9639 / NBRC 100938).